Reading from the N-terminus, the 283-residue chain is Secretory carrier-associated membrane protein 2 (283 aa).

A disordered region spans residues 1 to 47; sequence MARHDPNPFADEEINPFANHTSVPPASNSYLKPLPPEPYDRGATVDI. Topologically, residues 1-123 are cytoplasmic; it reads MARHDPNPFA…LQKIQYVAFT (123 aa). Residues 18-30 show a composition bias toward polar residues; it reads ANHTSVPPASNSY. A coiled-coil region spans residues 50 to 87; the sequence is DSGNDLRAKEMELQAKENELKRKEQELKRREDAIARTG. 4 helical membrane-spanning segments follow: residues 124 to 144, 151 to 171, 186 to 206, and 234 to 254; these read TLLG…VAWI, IWLL…VLWY, FGAF…AAVA, and IMYF…IWVI. Topologically, residues 255 to 283 are cytoplasmic; it reads QQVYAYFRGSGKAAEMKREATKSTLMRAL.

The protein belongs to the SCAMP family.

It localises to the cell membrane. Its subcellular location is the cytoplasmic vesicle. It is found in the secretory vesicle membrane. Functionally, probably involved in membrane trafficking. In Arabidopsis thaliana (Mouse-ear cress), this protein is Secretory carrier-associated membrane protein 2 (SCAMP2).